The chain runs to 103 residues: UPF0058 protein MJ1205 (103 aa).

This sequence belongs to the UPF0058 family.

This is UPF0058 protein MJ1205 from Methanocaldococcus jannaschii (strain ATCC 43067 / DSM 2661 / JAL-1 / JCM 10045 / NBRC 100440) (Methanococcus jannaschii).